We begin with the raw amino-acid sequence, 341 residues long: Alpha-1,4-N-acetylglucosaminyltransferase (341 aa).

Residues 1–4 (MLKE) are Cytoplasmic-facing. Residues 5-25 (IYLSLSLVLVFACGLLYQLTM) traverse the membrane as a helical; Signal-anchor for type II membrane protein segment. Residues 26 to 341 (RSQCFFACLP…VSKKPGTGSR (316 aa)) are Lumenal-facing. N-linked (GlcNAc...) asparagine glycosylation is present at Asn-100. A DXD motif motif is present at residues 168–170 (DTD).

This sequence belongs to the glycosyltransferase 32 family.

The protein localises to the golgi apparatus membrane. The protein operates within protein modification; protein glycosylation. Its function is as follows. Catalyzes the transfer of N-acetylglucosamine (GlcNAc) to core 2 branched O-glycans. Necessary for the synthesis of type III mucin which is specifically produced in the stomach, duodenum, and pancreatic duct. May protect against inflammation-associated gastric adenocarcinoma. The chain is Alpha-1,4-N-acetylglucosaminyltransferase from Mus musculus (Mouse).